Reading from the N-terminus, the 249-residue chain is 2-C-methyl-D-erythritol 4-phosphate cytidylyltransferase (249 aa).

Belongs to the IspD/TarI cytidylyltransferase family. IspD subfamily.

It catalyses the reaction 2-C-methyl-D-erythritol 4-phosphate + CTP + H(+) = 4-CDP-2-C-methyl-D-erythritol + diphosphate. It functions in the pathway isoprenoid biosynthesis; isopentenyl diphosphate biosynthesis via DXP pathway; isopentenyl diphosphate from 1-deoxy-D-xylulose 5-phosphate: step 2/6. Functionally, catalyzes the formation of 4-diphosphocytidyl-2-C-methyl-D-erythritol from CTP and 2-C-methyl-D-erythritol 4-phosphate (MEP). This Chromohalobacter salexigens (strain ATCC BAA-138 / DSM 3043 / CIP 106854 / NCIMB 13768 / 1H11) protein is 2-C-methyl-D-erythritol 4-phosphate cytidylyltransferase.